The primary structure comprises 210 residues: Ribonuclease HII (210 aa).

The RNase H type-2 domain occupies Gly18–Leu210. A divalent metal cation-binding residues include Asp24, Glu25, and Asp116.

The protein belongs to the RNase HII family. Requires Mn(2+) as cofactor. Mg(2+) is required as a cofactor.

It localises to the cytoplasm. It carries out the reaction Endonucleolytic cleavage to 5'-phosphomonoester.. Endonuclease that specifically degrades the RNA of RNA-DNA hybrids. The sequence is that of Ribonuclease HII from Shewanella baltica (strain OS155 / ATCC BAA-1091).